A 574-amino-acid polypeptide reads, in one-letter code: Proline--tRNA ligase (574 aa).

It belongs to the class-II aminoacyl-tRNA synthetase family. ProS type 1 subfamily. Homodimer.

Its subcellular location is the cytoplasm. It catalyses the reaction tRNA(Pro) + L-proline + ATP = L-prolyl-tRNA(Pro) + AMP + diphosphate. In terms of biological role, catalyzes the attachment of proline to tRNA(Pro) in a two-step reaction: proline is first activated by ATP to form Pro-AMP and then transferred to the acceptor end of tRNA(Pro). As ProRS can inadvertently accommodate and process non-cognate amino acids such as alanine and cysteine, to avoid such errors it has two additional distinct editing activities against alanine. One activity is designated as 'pretransfer' editing and involves the tRNA(Pro)-independent hydrolysis of activated Ala-AMP. The other activity is designated 'posttransfer' editing and involves deacylation of mischarged Ala-tRNA(Pro). The misacylated Cys-tRNA(Pro) is not edited by ProRS. This Nitratidesulfovibrio vulgaris (strain ATCC 29579 / DSM 644 / CCUG 34227 / NCIMB 8303 / VKM B-1760 / Hildenborough) (Desulfovibrio vulgaris) protein is Proline--tRNA ligase.